The sequence spans 511 residues: GMP synthase [glutamine-hydrolyzing] (511 aa).

Residues 5-195 (MILVLDFGGQ…LYNICGCKGD (191 aa)) enclose the Glutamine amidotransferase type-1 domain. Residue cysteine 82 is the Nucleophile of the active site. Catalysis depends on residues histidine 169 and glutamate 171. The GMPS ATP-PPase domain maps to 196 to 386 (WKMSSFVENS…LGIPEDLVWR (191 aa)). 223–229 (SGGVDSS) provides a ligand contact to ATP.

As to quaternary structure, homodimer.

It catalyses the reaction XMP + L-glutamine + ATP + H2O = GMP + L-glutamate + AMP + diphosphate + 2 H(+). It participates in purine metabolism; GMP biosynthesis; GMP from XMP (L-Gln route): step 1/1. Catalyzes the synthesis of GMP from XMP. This chain is GMP synthase [glutamine-hydrolyzing], found in Ruminiclostridium cellulolyticum (strain ATCC 35319 / DSM 5812 / JCM 6584 / H10) (Clostridium cellulolyticum).